Here is a 520-residue protein sequence, read N- to C-terminus: L-cysteine:1D-myo-inositol 2-amino-2-deoxy-alpha-D-glucopyranoside ligase (520 aa).

Cys-48 provides a ligand contact to Zn(2+). Residues Cys-48–Thr-51, Thr-63, and Asn-86–Thr-88 each bind L-cysteinyl-5'-AMP. Positions Ile-50 to His-60 match the 'HIGH' region motif. Positions Glu-192 to Pro-197 match the 'ERGGDP' region motif. Trp-232 lines the L-cysteinyl-5'-AMP pocket. Cys-236 contacts Zn(2+). Gly-254–Asp-256 provides a ligand contact to L-cysteinyl-5'-AMP. A Zn(2+)-binding site is contributed by His-261. Residue Ile-288 participates in L-cysteinyl-5'-AMP binding. Residues Lys-294–Ser-298 carry the 'KMSKS' region motif.

The protein belongs to the class-I aminoacyl-tRNA synthetase family. MshC subfamily. In terms of assembly, monomer. Zn(2+) serves as cofactor.

The catalysed reaction is 1D-myo-inositol 2-amino-2-deoxy-alpha-D-glucopyranoside + L-cysteine + ATP = 1D-myo-inositol 2-(L-cysteinylamino)-2-deoxy-alpha-D-glucopyranoside + AMP + diphosphate + H(+). Functionally, catalyzes the ATP-dependent condensation of GlcN-Ins and L-cysteine to form L-Cys-GlcN-Ins. This Corynebacterium kroppenstedtii (strain DSM 44385 / JCM 11950 / CIP 105744 / CCUG 35717) protein is L-cysteine:1D-myo-inositol 2-amino-2-deoxy-alpha-D-glucopyranoside ligase.